The following is a 24-amino-acid chain: Coenzyme PQQ synthesis protein A (24 aa).

The pyrroloquinoline quinone (Glu-Tyr) cross-link spans 16–20; sequence EITMY.

The protein belongs to the PqqA family.

Its pathway is cofactor biosynthesis; pyrroloquinoline quinone biosynthesis. In terms of biological role, required for coenzyme pyrroloquinoline quinone (PQQ) biosynthesis. PQQ is probably formed by cross-linking a specific glutamate to a specific tyrosine residue and excising these residues from the peptide. This is Coenzyme PQQ synthesis protein A from Burkholderia cenocepacia (strain ATCC BAA-245 / DSM 16553 / LMG 16656 / NCTC 13227 / J2315 / CF5610) (Burkholderia cepacia (strain J2315)).